Reading from the N-terminus, the 111-residue chain is Protein YibV (111 aa).

This is Protein YibV (yibV) from Escherichia coli O157:H7.